Here is a 157-residue protein sequence, read N- to C-terminus: Jacalin-related lectin 15 (157 aa).

One can recognise a Jacalin-type lectin domain in the interval alanine 13–proline 152.

This sequence belongs to the jacalin lectin family. In terms of tissue distribution, expressed in stems, leaves and flowers. Not detected in roots.

Functionally, confers broad resistance to potexviruses. Inhibits virus accumulation at the cellular level. This Arabidopsis thaliana (Mouse-ear cress) protein is Jacalin-related lectin 15 (JAL15).